The chain runs to 65 residues: Large ribosomal subunit protein bL35 (65 aa).

The interval 1 to 65 is disordered; that stretch reads MQKIKTNRSA…KELKRLLPGM (65 aa). Composition is skewed to basic residues over residues 10-19 and 33-47; these read AAKRFKRTKS and LTKK…LRKS. The span at 54 to 65 shows a compositional bias: basic and acidic residues; it reads NNKELKRLLPGM.

It belongs to the bacterial ribosomal protein bL35 family.

The sequence is that of Large ribosomal subunit protein bL35 from Desulfosudis oleivorans (strain DSM 6200 / JCM 39069 / Hxd3) (Desulfococcus oleovorans).